The sequence spans 723 residues: Nicastrin (723 aa).

Residues 1-16 form the signal peptide; that stretch reads MKKWLVIVLIIAGIRC. Topologically, residues 17 to 678 are extracellular; that stretch reads DGFSDQVFRT…ESVNLYLMED (662 aa). Asn40, Asn181, Asn271, Asn328, Asn409, and Asn627 each carry an N-linked (GlcNAc...) asparagine glycan. The chain crosses the membrane as a helical span at residues 679 to 699; the sequence is ASFEYTMILIAVISALLSIFA. Topologically, residues 700–723 are cytoplasmic; that stretch reads VGRCSETTFIVDEGEPAAEGGEPL.

This sequence belongs to the nicastrin family. Component of the gamma-secretase complex, a complex probably composed of the presenilin homodimer (sel-12, hop-1 or spe-4), nicastrin (aph-2), aph-1 and pen-2.

Its subcellular location is the membrane. In terms of biological role, essential subunit of the gamma-secretase complex, an endoprotease complex that catalyzes the intramembrane cleavage of integral membrane proteins such as Notch (glp-1 or lin-12). It may represents a stabilizing cofactor required for the assembly of the gamma-secretase complex. The chain is Nicastrin (aph-2) from Caenorhabditis elegans.